A 126-amino-acid polypeptide reads, in one-letter code: Aspartate 1-decarboxylase (126 aa).

The active-site Schiff-base intermediate with substrate; via pyruvic acid is the serine 25. The residue at position 25 (serine 25) is a Pyruvic acid (Ser). A substrate-binding site is contributed by threonine 57. The active-site Proton donor is tyrosine 58. 73–75 is a binding site for substrate; it reads GAA.

This sequence belongs to the PanD family. As to quaternary structure, heterooctamer of four alpha and four beta subunits. Pyruvate serves as cofactor. In terms of processing, is synthesized initially as an inactive proenzyme, which is activated by self-cleavage at a specific serine bond to produce a beta-subunit with a hydroxyl group at its C-terminus and an alpha-subunit with a pyruvoyl group at its N-terminus.

It localises to the cytoplasm. The catalysed reaction is L-aspartate + H(+) = beta-alanine + CO2. It participates in cofactor biosynthesis; (R)-pantothenate biosynthesis; beta-alanine from L-aspartate: step 1/1. Catalyzes the pyruvoyl-dependent decarboxylation of aspartate to produce beta-alanine. In Photorhabdus laumondii subsp. laumondii (strain DSM 15139 / CIP 105565 / TT01) (Photorhabdus luminescens subsp. laumondii), this protein is Aspartate 1-decarboxylase.